The chain runs to 422 residues: Protein phosphatase 1 regulatory subunit 36 (422 aa).

Interacts with PPP1CA.

In terms of biological role, inhibits phosphatase activity of protein phosphatase 1 (PP1) complexes. In Homo sapiens (Human), this protein is Protein phosphatase 1 regulatory subunit 36 (PPP1R36).